Reading from the N-terminus, the 279-residue chain is Succinate dehydrogenase [ubiquinone] iron-sulfur subunit 1, mitochondrial (279 aa).

Residues 1 to 28 constitute a mitochondrion transit peptide; sequence MASGLIGRLVGTKPSKLATAARLIPARW. Residues 52-141 form the 2Fe-2S ferredoxin-type domain; the sequence is FQIYRWNPDN…ETTITPLPHM (90 aa). The [2Fe-2S] cluster site is built by Cys-102, Cys-107, and Cys-122. In terms of domain architecture, 4Fe-4S ferredoxin-type spans 184–214; sequence DRAKLDGMYECILCACCSTSCPSYWWNPESY. [4Fe-4S] cluster is bound by residues Cys-194, Cys-197, and Cys-200. A [3Fe-4S] cluster-binding site is contributed by Cys-204. Trp-209 contributes to the a ubiquinone binding site. Residues Cys-251 and Cys-257 each coordinate [3Fe-4S] cluster. [4Fe-4S] cluster is bound at residue Cys-261.

This sequence belongs to the succinate dehydrogenase/fumarate reductase iron-sulfur protein family. In terms of assembly, component of complex II composed of eight subunits in plants: four classical SDH subunits SDH1, SDH2, SDH3 and SDH4 (a flavoprotein (FP), an iron-sulfur protein (IP), and a cytochrome b composed of a large and a small subunit.), as well as four subunits unknown in mitochondria from bacteria and heterotrophic eukaryotes. [2Fe-2S] cluster is required as a cofactor. The cofactor is [3Fe-4S] cluster. Requires [4Fe-4S] cluster as cofactor. Ubiquitous. Preferentially expressed in flowers and inflorescences.

It is found in the mitochondrion inner membrane. The enzyme catalyses a quinone + succinate = fumarate + a quinol. It functions in the pathway carbohydrate metabolism; tricarboxylic acid cycle; fumarate from succinate (eukaryal route): step 1/1. In terms of biological role, iron-sulfur protein (IP) subunit of succinate dehydrogenase (SDH) that is involved in complex II of the mitochondrial electron transport chain and is responsible for transferring electrons from succinate to ubiquinone (coenzyme Q). The polypeptide is Succinate dehydrogenase [ubiquinone] iron-sulfur subunit 1, mitochondrial (SDH2-1) (Arabidopsis thaliana (Mouse-ear cress)).